Reading from the N-terminus, the 185-residue chain is Peptidyl-tRNA hydrolase (185 aa).

TRNA is bound at residue Y14. The active-site Proton acceptor is H19. Y64, N66, and N112 together coordinate tRNA.

This sequence belongs to the PTH family. As to quaternary structure, monomer.

The protein localises to the cytoplasm. It carries out the reaction an N-acyl-L-alpha-aminoacyl-tRNA + H2O = an N-acyl-L-amino acid + a tRNA + H(+). Its function is as follows. Hydrolyzes ribosome-free peptidyl-tRNAs (with 1 or more amino acids incorporated), which drop off the ribosome during protein synthesis, or as a result of ribosome stalling. In terms of biological role, catalyzes the release of premature peptidyl moieties from peptidyl-tRNA molecules trapped in stalled 50S ribosomal subunits, and thus maintains levels of free tRNAs and 50S ribosomes. This chain is Peptidyl-tRNA hydrolase, found in Lactobacillus helveticus (strain DPC 4571).